Consider the following 388-residue polypeptide: Dual-specificity RNA methyltransferase RlmN (388 aa).

E109 functions as the Proton acceptor in the catalytic mechanism. A Radical SAM core domain is found at 115–354 (EEDRATLCVS…TIVRKTRGDD (240 aa)). A disulfide bond links C122 and C359. C129, C133, and C136 together coordinate [4Fe-4S] cluster. S-adenosyl-L-methionine is bound by residues 183–184 (GE), S215, 237–239 (SLH), and N316. C359 serves as the catalytic S-methylcysteine intermediate.

The protein belongs to the radical SAM superfamily. RlmN family. The cofactor is [4Fe-4S] cluster.

The protein localises to the cytoplasm. It carries out the reaction adenosine(2503) in 23S rRNA + 2 reduced [2Fe-2S]-[ferredoxin] + 2 S-adenosyl-L-methionine = 2-methyladenosine(2503) in 23S rRNA + 5'-deoxyadenosine + L-methionine + 2 oxidized [2Fe-2S]-[ferredoxin] + S-adenosyl-L-homocysteine. The enzyme catalyses adenosine(37) in tRNA + 2 reduced [2Fe-2S]-[ferredoxin] + 2 S-adenosyl-L-methionine = 2-methyladenosine(37) in tRNA + 5'-deoxyadenosine + L-methionine + 2 oxidized [2Fe-2S]-[ferredoxin] + S-adenosyl-L-homocysteine. Specifically methylates position 2 of adenine 2503 in 23S rRNA and position 2 of adenine 37 in tRNAs. m2A2503 modification seems to play a crucial role in the proofreading step occurring at the peptidyl transferase center and thus would serve to optimize ribosomal fidelity. This chain is Dual-specificity RNA methyltransferase RlmN, found in Klebsiella pneumoniae (strain 342).